Reading from the N-terminus, the 287-residue chain is Polyamine aminopropyltransferase (287 aa).

The 234-residue stretch at 9–242 folds into the PABS domain; that stretch reads GSWLDEYQND…GIWSWTFASI (234 aa). Gln-36 is an S-methyl-5'-thioadenosine binding site. Spermidine is bound by residues His-67 and Asp-91. S-methyl-5'-thioadenosine is bound by residues Glu-111 and 143–144; that span reads NG. Asp-162 (proton acceptor) is an active-site residue. Pro-169 contacts S-methyl-5'-thioadenosine.

It belongs to the spermidine/spermine synthase family. In terms of assembly, homodimer or homotetramer.

Its subcellular location is the cytoplasm. It carries out the reaction S-adenosyl 3-(methylsulfanyl)propylamine + putrescine = S-methyl-5'-thioadenosine + spermidine + H(+). It functions in the pathway amine and polyamine biosynthesis; spermidine biosynthesis; spermidine from putrescine: step 1/1. Catalyzes the irreversible transfer of a propylamine group from the amino donor S-adenosylmethioninamine (decarboxy-AdoMet) to putrescine (1,4-diaminobutane) to yield spermidine. The polypeptide is Polyamine aminopropyltransferase (Prochlorococcus marinus (strain SARG / CCMP1375 / SS120)).